The chain runs to 115 residues: Large ribosomal subunit protein uL22 (115 aa).

It belongs to the universal ribosomal protein uL22 family. As to quaternary structure, part of the 50S ribosomal subunit.

Its function is as follows. This protein binds specifically to 23S rRNA; its binding is stimulated by other ribosomal proteins, e.g. L4, L17, and L20. It is important during the early stages of 50S assembly. It makes multiple contacts with different domains of the 23S rRNA in the assembled 50S subunit and ribosome. Functionally, the globular domain of the protein is located near the polypeptide exit tunnel on the outside of the subunit, while an extended beta-hairpin is found that lines the wall of the exit tunnel in the center of the 70S ribosome. The sequence is that of Large ribosomal subunit protein uL22 from Limosilactobacillus reuteri subsp. reuteri (strain JCM 1112) (Lactobacillus reuteri).